We begin with the raw amino-acid sequence, 345 residues long: Platelet-derived growth factor C (345 aa).

The N-terminal stretch at 1–22 (MSLFGLLLLTSALAGQRQGTQA) is a signal peptide. N-linked (GlcNAc...) asparagine glycans are attached at residues asparagine 25 and asparagine 55. Residues 46 to 163 (HERIITVSTN…PGFCIHYNIV (118 aa)) form the CUB domain. 4 disulfide bridges follow: cysteine 104-cysteine 124, cysteine 250-cysteine 294, cysteine 280-cysteine 335, and cysteine 287-cysteine 337.

Belongs to the PDGF/VEGF growth factor family. In terms of assembly, homodimer; disulfide-linked. Interacts with PDGFRA homodimers, and with heterodimers formed by PDGFRA and PDGFRB. Interacts (via CUB domain) with PLAT (via kringle domain). In terms of processing, proteolytic removal of the N-terminal CUB domain releasing the core domain is necessary for unmasking the receptor-binding epitopes of the core domain. Cleavage after basic residues in the hinge region (region connecting the CUB and growth factor domains) gives rise to the receptor-binding form. Cleaved by PLAT and PLG. Sumoylated with SUMO1. Post-translationally, N-glycosylated. In terms of tissue distribution, expressed in the fallopian tube, vascular smooth muscle cells in kidney, breast and colon and in visceral smooth muscle of the gastrointestinal tract. Highly expressed in retinal pigment epithelia. Expressed in medulloblastoma. In the kidney, constitutively expressed in parietal epithelial cells of Bowman's capsule, tubular epithelial cells and in arterial endothelial cells (at protein level). Highly expressed in the platelets, prostate, testis and uterus. Higher expression is observed in uterine leiomyomata. Weaker expression in the spleen, thymus, heart, pancreas, liver, ovary cells and small intestine, and negligible expression in the colon and peripheral blood leukocytes.

It localises to the cytoplasm. The protein localises to the cytosol. The protein resides in the secreted. It is found in the nucleus. Its subcellular location is the cytoplasmic granule. It localises to the cell membrane. Growth factor that plays an essential role in the regulation of embryonic development, cell proliferation, cell migration, survival and chemotaxis. Potent mitogen and chemoattractant for cells of mesenchymal origin. Required for normal skeleton formation during embryonic development, especially for normal development of the craniofacial skeleton and for normal development of the palate. Required for normal skin morphogenesis during embryonic development. Plays an important role in wound healing, where it appears to be involved in three stages: inflammation, proliferation and remodeling. Plays an important role in angiogenesis and blood vessel development. Involved in fibrotic processes, in which transformation of interstitial fibroblasts into myofibroblasts plus collagen deposition occurs. The CUB domain has mitogenic activity in coronary artery smooth muscle cells, suggesting a role beyond the maintenance of the latency of the PDGF domain. In the nucleus, PDGFC seems to have additional function. In Homo sapiens (Human), this protein is Platelet-derived growth factor C (PDGFC).